A 194-amino-acid chain; its full sequence is Yellow fluorescent protein (194 aa).

Lumazine-binding repeat units follow at residues 1-98 (MFKG…SGGH) and 99-194 (ILSA…NQCW). 179–183 (KVNVE) serves as a coordination point for FMN.

In terms of assembly, homodimer. FMN is required as a cofactor.

Functionally, antenna protein that modulates the color of the bioluminescence emission of the luciferase. In the presence of YFP and only at temperatures below 20 degrees Celsius, luciferase exhibits a bimodal emission spectrum with a new peak at 545 nM (yellow), in addition to the one at 485 nM. The protein is Yellow fluorescent protein (luxY) of Aliivibrio fischeri (Vibrio fischeri).